A 526-amino-acid chain; its full sequence is Probable feruloyl esterase B-2 (526 aa).

The first 19 residues, M1–A19, serve as a signal peptide directing secretion. 2 disulfide bridges follow: C28–C75 and C63–C114. N53, N85, N98, and N138 each carry an N-linked (GlcNAc...) asparagine glycan. Cystine bridges form between C187-C441, C256-C273, and C282-C291. Catalysis depends on S188, which acts as the Acyl-ester intermediate. The N-linked (GlcNAc...) asparagine glycan is linked to N246. Residues D257, D260, A262, D264, and I266 each contribute to the Ca(2+) site. N287 and N311 each carry an N-linked (GlcNAc...) asparagine glycan. Catalysis depends on charge relay system residues D400 and H440. N490 and N516 each carry an N-linked (GlcNAc...) asparagine glycan. C503 and C525 are joined by a disulfide.

Belongs to the tannase family.

The protein resides in the secreted. The enzyme catalyses feruloyl-polysaccharide + H2O = ferulate + polysaccharide.. Its function is as follows. Involved in degradation of plant cell walls. Hydrolyzes the feruloyl-arabinose ester bond in arabinoxylans as well as the feruloyl-galactose and feruloyl-arabinose ester bonds in pectin. This chain is Probable feruloyl esterase B-2 (faeB-2), found in Aspergillus oryzae (strain ATCC 42149 / RIB 40) (Yellow koji mold).